Reading from the N-terminus, the 692-residue chain is Elongation factor G (692 aa).

The region spanning 8–282 (AKTRNIGIMA…AVIAYLPSPL (275 aa)) is the tr-type G domain. GTP contacts are provided by residues 17–24 (AHVDAGKT), 81–85 (DTPGH), and 135–138 (NKMD).

This sequence belongs to the TRAFAC class translation factor GTPase superfamily. Classic translation factor GTPase family. EF-G/EF-2 subfamily.

It is found in the cytoplasm. Catalyzes the GTP-dependent ribosomal translocation step during translation elongation. During this step, the ribosome changes from the pre-translocational (PRE) to the post-translocational (POST) state as the newly formed A-site-bound peptidyl-tRNA and P-site-bound deacylated tRNA move to the P and E sites, respectively. Catalyzes the coordinated movement of the two tRNA molecules, the mRNA and conformational changes in the ribosome. In Streptococcus pyogenes serotype M1, this protein is Elongation factor G (fus).